The sequence spans 781 residues: Acyl-CoA dehydrogenase family member 11 (781 aa).

N6-acetyllysine is present on Lys-177. At Tyr-325 the chain carries Phosphotyrosine. Lys-392 is subject to N6-succinyllysine. Residues 505-515 (FCMTEPDVASS), 513-515 (ASS), 539-541 (WSS), and Ser-541 each bind FAD. Ser-515 provides a ligand contact to substrate. Residue 630–633 (GPGR) participates in substrate binding. FAD is bound by residues Arg-658, Gln-728, and 728 to 732 (QVCGG). Gly-756 contributes to the substrate binding site. FAD-binding positions include 757–759 (PDE) and Glu-759.

Belongs to the acyl-CoA dehydrogenase family. As to quaternary structure, homodimer. FAD is required as a cofactor.

The protein resides in the peroxisome. It is found in the mitochondrion membrane. The enzyme catalyses a 2,3-saturated acyl-CoA + oxidized [electron-transfer flavoprotein] + H(+) = a (2E)-enoyl-CoA + reduced [electron-transfer flavoprotein]. It catalyses the reaction docosanoyl-CoA + oxidized [electron-transfer flavoprotein] + H(+) = (2E)-docosenoyl-CoA + reduced [electron-transfer flavoprotein]. It carries out the reaction tetracosanoyl-CoA + oxidized [electron-transfer flavoprotein] + H(+) = (2E)-tetracosenoyl-CoA + reduced [electron-transfer flavoprotein]. The catalysed reaction is eicosanoyl-CoA + oxidized [electron-transfer flavoprotein] + H(+) = (2E)-eicosenoyl-CoA + reduced [electron-transfer flavoprotein]. The enzyme catalyses hexacosanoyl-CoA + oxidized [electron-transfer flavoprotein] + H(+) = (2E)-hexacosenoyl-CoA + reduced [electron-transfer flavoprotein]. It catalyses the reaction tricosanoyl-CoA + oxidized [electron-transfer flavoprotein] + H(+) = (2E)-tricosenoyl-CoA + reduced [electron-transfer flavoprotein]. Its pathway is lipid metabolism; fatty acid beta-oxidation. In terms of biological role, acyl-CoA dehydrogenase, that exhibits maximal activity towards saturated C22-CoA. Probably participates in beta-oxydation and energy production but could also play a role in the metabolism of specific fatty acids to control fatty acids composition of cellular lipids in brain. The polypeptide is Acyl-CoA dehydrogenase family member 11 (ACAD11) (Pongo abelii (Sumatran orangutan)).